Reading from the N-terminus, the 129-residue chain is Replication initiation control protein YabA (129 aa).

Residues His103, Cys105, Cys119, and Cys122 each contribute to the Zn(2+) site.

This sequence belongs to the YabA family. Homotetramer. Interacts with both DnaA and DnaN, acting as a bridge between these two proteins. Zn(2+) is required as a cofactor.

Its subcellular location is the cytoplasm. It localises to the nucleoid. Involved in control of chromosome replication initiation. Inhibits the cooperative binding of DnaA to the oriC region, thus negatively regulating initiation of chromosome replication. Inhibits the ability of DnaA-ATP to form a helix on DNA; does not disassemble preformed DnaA-DNA helices. Decreases the residence time of DnaA on the chromosome at its binding sites (oriC, replication forks and promoter-binding sites). Tethers DnaA to the replication machinery via the DNA polymerase beta sliding clamp subunit (dnaN). Associates with oriC and other DnaA targets on the chromosome in a DnaA-dependent manner. This chain is Replication initiation control protein YabA, found in Listeria monocytogenes serotype 4b (strain CLIP80459).